The following is a 151-amino-acid chain: Small ribosomal subunit protein uS15 (151 aa).

This sequence belongs to the universal ribosomal protein uS15 family.

This Pisum sativum (Garden pea) protein is Small ribosomal subunit protein uS15 (RPS13).